A 664-amino-acid chain; its full sequence is Methionine--tRNA ligase (664 aa).

The 'HIGH' region signature appears at 15-25; sequence YYPSGKAHIGH. Residues 310-314 carry the 'KMSKS' region motif; the sequence is KMSKS. Position 313 (Lys-313) interacts with ATP. One can recognise a tRNA-binding domain in the interval 563–664; the sequence is DFDKIDLRVA…SALPNGAKVK (102 aa).

Belongs to the class-I aminoacyl-tRNA synthetase family. MetG type 2B subfamily. Homodimer.

It localises to the cytoplasm. The catalysed reaction is tRNA(Met) + L-methionine + ATP = L-methionyl-tRNA(Met) + AMP + diphosphate. In terms of biological role, is required not only for elongation of protein synthesis but also for the initiation of all mRNA translation through initiator tRNA(fMet) aminoacylation. In Listeria innocua serovar 6a (strain ATCC BAA-680 / CLIP 11262), this protein is Methionine--tRNA ligase (metG).